We begin with the raw amino-acid sequence, 418 residues long: Sprouty-related, EVH1 domain-containing protein 2 (418 aa).

One can recognise a WH1 domain in the interval 5–122 (THPDDDSYIV…RGVRKAIEDL (118 aa)). Residues 127–172 (TTSSSTIHNEAELGDDDVFTTATDSSSNSSQKREQPTRTVSSPTSC) are disordered. Residues 146-156 (TTATDSSSNSS) show a composition bias toward polar residues. A KBD domain is found at 201–257 (PYRQVSFPDDDEEIVRINPREKIWMTGYEDYRHAPVRGKYPDPSEDVDSSYVRFAKG). Serine 206 bears the Phosphoserine mark. Residues tyrosine 228 and tyrosine 231 each carry the phosphotyrosine modification. A disordered region spans residues 275–302 (GLGEDPKGRGGSVIKTQPSRGKSRRRKE). The SPR domain maps to 308–416 (RCVYCRDMFN…CRCCGGKHKA (109 aa)).

In terms of assembly, homodimer and heterodimer. Able to interact with SPRED1 to form heterodimers. Interacts with RAS. May interact with ZDHHC13 (via ANK repeats) and ZDHHC17 (via ANK repeats). Interacts with TESK1. Interacts with NF1. Phosphorylated on serine and threonine residues. Phosphorylated on tyrosine. Phosphorylation of Tyr-228 and Tyr-231 are required for ubiquitination. Post-translationally, ubiquitinated; leading to degradation by the proteasome.

The protein resides in the cell membrane. It localises to the cytoplasmic vesicle. Its subcellular location is the secretory vesicle membrane. It is found in the cytoplasm. Negatively regulates Ras signaling pathways and downstream activation of MAP kinases. Recruits and translocates NF1 to the cell membrane, thereby enabling NF1-dependent hydrolysis of active GTP-bound Ras to inactive GDP-bound Ras. Inhibits fibroblast growth factor (FGF)-induced retinal lens fiber differentiation, probably by inhibiting FGF-mediated phosphorylation of ERK1/2. Inhibits TGFB-induced epithelial-to-mesenchymal transition in lens epithelial cells. In Pongo abelii (Sumatran orangutan), this protein is Sprouty-related, EVH1 domain-containing protein 2 (SPRED2).